A 696-amino-acid polypeptide reads, in one-letter code: DNA topoisomerase 6 subunit B (696 aa).

The segment at 1–36 (MDDDAGDGAASGGTKRKVTAASSSAAAKGKAAGKGK) is disordered. A compositionally biased stretch (low complexity) spans 20–36 (AASSSAAAKGKAAGKGK). ATP-binding positions include N88, D187, 208–209 (TK), 217–224 (GKFGLGAK), and K543.

This sequence belongs to the TOP6B family. As to quaternary structure, homodimer. Heterotetramer of two TOP6A and two TOP6B subunits. Interacts with SPO11-4.

It localises to the nucleus. It carries out the reaction ATP-dependent breakage, passage and rejoining of double-stranded DNA.. Component of the DNA topoisomerase VI involved in chromatin organization and progression of endoreduplication cycles. Relaxes both positive and negative superturns and exhibits a strong decatenase activity. The B subunit binds ATP. This is DNA topoisomerase 6 subunit B (TOP6B) from Oryza sativa subsp. japonica (Rice).